A 787-amino-acid polypeptide reads, in one-letter code: MSAPIVETKKASKRRIRRIPDDQRQKVSSACDNCKKRKFKCSGEKPCFECSKKGHDCTYTIIDKRSLRGERMAKLKQKKDNNEKQRELVNEQIAQSSIIHPQITPVLPVPEYANVTYQDSSHSTVSGNDSYHLSSSSSIPQNLPAIVLPDTLRDPNNRGILTPGSTPNSVSSESSVSNVCVPKSLQPLLSFPLENKNNLRHKSEEPDMDNNTNNVPKKGGISNQEGKSAILLVDKSGAFRYMGETSPLSVLYEARGIFYEYVGSTKLTEDLRGCPVTDKPLKITMKEAAPLPHPSERDVYIERFKVNINGAYFVFDMDKFYEEIVDKVYENPNSDLVQENRVLLYFVLAIGSTYKDFSERNPQAEKGAHYFESGRLILRDLVEDSAMWCVLCHYLQFHYYESILKKSTALVHLTAAINYAQSLGLHRNFVNEQFSKLTAEYEYRRKLFRSLYISDRISSVFIGRPLIINDYDWDDPARFKNTNASVLPLDFNSKCHIELTRICTLVGRIVANFYQDKMIDVKKTKNLAIQLRLWSKGLDPELAFGNVLNPSQISNNEDNGNTVILLGIHILHLWAVMLLSRPFFMFEAISKINPEMRKSFEEEEELSKQLCQAATKASILAIKLMNHYINTTFHEIKRMECYVIITCCFYASIILGITILNGTFEEAGYTENDLMNSLKDAQYILSQFSVCNKGAERYSEINLDLISALVNRHKGKEVKPVVDNWSCNLFNDFNFGDTSGQNDVQTMMDFQQFFVSSDLIQFEEITDGTSSLPFDYNNYNLFFGDKL.

A disordered region spans residues 1–22 (MSAPIVETKKASKRRIRRIPDD). A DNA-binding region (zn(2)-C6 fungal-type) is located at residues 31 to 57 (CDNCKKRKFKCSGEKPCFECSKKGHDC). Residues 69–97 (GERMAKLKQKKDNNEKQRELVNEQIAQSS) are a coiled coil. Disordered regions lie at residues 120-140 (SSHS…SSIP) and 200-221 (RHKS…KGGI). A compositionally biased stretch (polar residues) spans 209-221 (DNNTNNVPKKGGI).

It localises to the nucleus. Its function is as follows. Transcription factor involved in yeast cell adherence to silicone substrate, filamentous growth, and biofilm formation. The polypeptide is Filamentous growth regulator 27 (FGR27) (Candida albicans (strain SC5314 / ATCC MYA-2876) (Yeast)).